The chain runs to 788 residues: MKKRFPTLLATLIWTALYSQHTLADLAEQCMLGVPTYDQPLVTGDPNQLPVRINADKTEANYPDNALFTGNVIVQQGNSTLTANQVELTQVQKPGEAIPVRTVTATGDVNYDDPQIKLKGPKGWSNLNTKDTDMDKGKYQMVGRQGRGDADLMKLRGQNRYTILENGTFTSCLPGDNSWSVVGSEVIHDREEQVAEIWNARFKIGKVPVFYSPYMQLPVGDKRRSGFLIPNAKYTSNNGLEFMLPYYWNIAPNFDATITPHYMERRGLQWQNEFRYLLAPGSGTMALDWLPSDRLYHGTDGTEKDPTRWLYYWGHSGVMDKVWRFNVNYTRVSDPDYFTDLTSQYGSTTDGYATQIFSVGYADQNWDATLASKQFQVFTTGGNNNAYRAQPQLDMNYYKNDIGPFDLHIYGQAAKFTSVNPENPEAERFHIEPSINLPLANGWGSLNTEAKLLATHYQQDIPNGFASNYKNQNGQDATVPNLKDSVNRVIPQFKVDGKVVFDRPMDWSEGFTQTLEPRVQYLYVPYRNQDDIYIYDTTLMQSDYSGLFRDRTYSGLDRIASANQVSTGLTSRIYDDELVERFNVSVGQIYYFSRSRTGNSETIDNSDDTGSLVWAGDTFWRINDQLGLKGGAQYDTRLGSLTLGNAVMEYRKDAERMIQLNYRYASPEYIQAAVPNVKSPGYQQGISQIGTTASWPIADRWALVGAYYYDTKANQPASQLVGVQYNTCCWAINLGYERKITGWNNQNETSKYDNKVSFNIELRGLSSDHSLGTAQMLGSGILPYQSAF.

Positions 1 to 24 (MKKRFPTLLATLIWTALYSQHTLA) are cleaved as a signal peptide.

The protein belongs to the LptD family. Component of the lipopolysaccharide transport and assembly complex. Interacts with LptE and LptA.

The protein localises to the cell outer membrane. Together with LptE, is involved in the assembly of lipopolysaccharide (LPS) at the surface of the outer membrane. In Yersinia enterocolitica serotype O:8 / biotype 1B (strain NCTC 13174 / 8081), this protein is LPS-assembly protein LptD.